Consider the following 75-residue polypeptide: Parvalbumin beta 3 (75 aa).

An N-acetylalanine modification is found at Ala1. In terms of domain architecture, EF-hand spans 26–61 (YKAFFAKKAFFVIDQDKSGFIEEDELKLFLQVFSAG). The Ca(2+) site is built by Asp39, Asp41, Ser43, Phe45, Glu47, and Glu50.

The protein belongs to the parvalbumin family.

Its function is as follows. In muscle, parvalbumin is thought to be involved in relaxation after contraction. It binds two calcium ions. This is Parvalbumin beta 3 from Merluccius gayi (South Pacific hake).